We begin with the raw amino-acid sequence, 489 residues long: Fumarate reductase (CoM/CoB) subunit B (489 aa).

The 2Fe-2S ferredoxin-type domain maps to 2–89 (INVKVLRFEP…GAVIEPVDLP (88 aa)). 4 residues coordinate [2Fe-2S] cluster: Cys-53, Cys-58, Cys-61, and Cys-73. 4Fe-4S ferredoxin-type domains lie at 124 to 158 (PEDY…YAGP) and 178 to 209 (AAGG…PGDA). Residues Cys-136, Cys-139, Cys-142, Cys-146, Cys-189, Cys-192, Cys-195, and Cys-199 each coordinate [4Fe-4S] cluster.

Subunit B of the heterodimeric fumarate reductase of methanogenic Archaea, composed of subunits A (TfrA) and B (TfrB). The cofactor is [2Fe-2S] cluster. It depends on [4Fe-4S] cluster as a cofactor.

The protein resides in the cytoplasm. The enzyme catalyses coenzyme B + coenzyme M + fumarate = coenzyme M-coenzyme B heterodisulfide + succinate. In terms of biological role, catalyzes the reduction of fumarate with reduced coenzyme M (CoM-S-H) and coenzyme B (CoB-S-H). In vitro, is able to reduces fumarate with reduced benzyl viologen, oxidize CoM-S-H and CoB-S-H to CoM-S-S-CoB with methylene blue, and reduce CoM-S-S-CoB with reduced benzyl viologen. The enzyme has specificity for the two thiol compounds as the CoB--CoM heterodisulfide reductase. The enzyme is very sensitive to oxygen. This Methanothermobacter marburgensis (strain ATCC BAA-927 / DSM 2133 / JCM 14651 / NBRC 100331 / OCM 82 / Marburg) (Methanobacterium thermoautotrophicum) protein is Fumarate reductase (CoM/CoB) subunit B.